The sequence spans 123 residues: Small ribosomal subunit protein uS12c (123 aa).

The protein belongs to the universal ribosomal protein uS12 family. In terms of assembly, part of the 30S ribosomal subunit.

The protein resides in the plastid. The protein localises to the chloroplast. Its function is as follows. With S4 and S5 plays an important role in translational accuracy. Located at the interface of the 30S and 50S subunits. The chain is Small ribosomal subunit protein uS12c (rps12) from Pinus thunbergii (Japanese black pine).